Here is a 218-residue protein sequence, read N- to C-terminus: Leucine-rich repeat protein 2 (218 aa).

The signal sequence occupies residues 1 to 27 (MVAQNSRRELLAASLILTLALIRLTEA). LRR repeat units lie at residues 69–93 (HHQV…LGKL), 94–117 (EHLQ…LGNL), 119–141 (SLIS…LGKL), 142–165 (KSLV…LTVI), and 167–190 (SLKV…PFEH).

Probably involved in plant defense response. In Arabidopsis thaliana (Mouse-ear cress), this protein is Leucine-rich repeat protein 2.